We begin with the raw amino-acid sequence, 503 residues long: UDP-N-acetylmuramoyl-L-alanyl-D-glutamate--2,6-diaminopimelate ligase (503 aa).

S32 lines the UDP-N-acetyl-alpha-D-muramoyl-L-alanyl-D-glutamate pocket. ATP is bound at residue 117-123; it reads GTNGKTT. UDP-N-acetyl-alpha-D-muramoyl-L-alanyl-D-glutamate is bound by residues 159-160, S186, Q192, and R194; that span reads TT. K226 is modified (N6-carboxylysine). Residues R396, 420–423, G471, and E475 contribute to the meso-2,6-diaminopimelate site; that span reads DNPR. A Meso-diaminopimelate recognition motif motif is present at residues 420–423; that stretch reads DNPR.

It belongs to the MurCDEF family. MurE subfamily. It depends on Mg(2+) as a cofactor. In terms of processing, carboxylation is probably crucial for Mg(2+) binding and, consequently, for the gamma-phosphate positioning of ATP.

It is found in the cytoplasm. It catalyses the reaction UDP-N-acetyl-alpha-D-muramoyl-L-alanyl-D-glutamate + meso-2,6-diaminopimelate + ATP = UDP-N-acetyl-alpha-D-muramoyl-L-alanyl-gamma-D-glutamyl-meso-2,6-diaminopimelate + ADP + phosphate + H(+). It functions in the pathway cell wall biogenesis; peptidoglycan biosynthesis. Functionally, catalyzes the addition of meso-diaminopimelic acid to the nucleotide precursor UDP-N-acetylmuramoyl-L-alanyl-D-glutamate (UMAG) in the biosynthesis of bacterial cell-wall peptidoglycan. This is UDP-N-acetylmuramoyl-L-alanyl-D-glutamate--2,6-diaminopimelate ligase from Prochlorococcus marinus (strain SARG / CCMP1375 / SS120).